A 348-amino-acid chain; its full sequence is Rhodopsin (348 aa).

Residues 1–33 (TEGPFFYIPMVNTSGVVRSPYEYPQYYLVNPAA) are Extracellular-facing. N-linked (GlcNAc...) asparagine glycosylation occurs at Asn-12. Residues 34–58 (YAILGAYMFFLIIIGFPVNFMTLYV) form a helical membrane-spanning segment. Residues 59 to 70 (TLEHKKLRTPLN) lie on the Cytoplasmic side of the membrane. Residues 71 to 93 (YILLNLAVADLFMVIGGFTTTMY) form a helical membrane-spanning segment. The Extracellular portion of the chain corresponds to 94–107 (SSMHGYFVLGRLGC). Cys-107 and Cys-184 are joined by a disulfide. A helical membrane pass occupies residues 108-130 (NMEGFSATLGGMISLWSLAVLAI). The short motif at 131–133 (ERW) is the 'Ionic lock' involved in activated form stabilization element. Topologically, residues 131 to 149 (ERWVVVCKPISNFRFGENH) are cytoplasmic. The helical transmembrane segment at 150–170 (AIMGVSLTWFMALACTVPPLV) threads the bilayer. The Extracellular segment spans residues 171-199 (GWSRYIPEGMQCSCGIDYYTRAEGFNNES). N-linked (GlcNAc...) asparagine glycosylation is present at Asn-197. Residues 200–221 (FVLYMFFCHFLVPLVIIFFCYG) form a helical membrane-spanning segment. Over 222–249 (RLLCAVKEAAAAQQESETTQRAEREVTR) the chain is Cytoplasmic. Residues 250–271 (MVIIMVIGFLVCWLPYASVAWF) form a helical membrane-spanning segment. The Extracellular portion of the chain corresponds to 272 to 283 (IFTHQGSEFGPL). Residues 284–305 (FMTIPAFFAKSSSIYNPMIYIC) form a helical membrane-spanning segment. Lys-293 carries the N6-(retinylidene)lysine modification. Residues 306-348 (MNKQFRNCMITTLFCGKNPFEGEEEGASSTKTEASSASSVSPA) are Cytoplasmic-facing. Cys-320 carries the S-palmitoyl cysteine lipid modification. The disordered stretch occupies residues 327–348 (GEEEGASSTKTEASSASSVSPA). A compositionally biased stretch (low complexity) spans 332 to 348 (ASSTKTEASSASSVSPA).

Belongs to the G-protein coupled receptor 1 family. Opsin subfamily. Phosphorylated on some or all of the serine and threonine residues present in the C-terminal region. Post-translationally, contains one covalently linked retinal chromophore.

Its subcellular location is the membrane. It localises to the cell projection. The protein resides in the cilium. The protein localises to the photoreceptor outer segment. Its function is as follows. Photoreceptor required for image-forming vision at low light intensity. While most salt water fish species use retinal as chromophore, most freshwater fish use 3-dehydroretinal, or a mixture of retinal and 3-dehydroretinal. Light-induced isomerization of 11-cis to all-trans retinal triggers a conformational change that activates signaling via G-proteins. Subsequent receptor phosphorylation mediates displacement of the bound G-protein alpha subunit by arrestin and terminates signaling. This Sargocentron punctatissimum (Speckled squirrelfish) protein is Rhodopsin (rho).